A 238-amino-acid polypeptide reads, in one-letter code: Citrate-binding protein (238 aa).

A signal peptide spans 1 to 31; sequence MKMKRSPYCFCCSFALLLLVSFLKDRHFCSA. A propeptide spans 225–238 (removed in mature form); sequence LEGCNNNHGTWLVQ.

The protein resides in the vacuole. Its function is as follows. May be a subunit of a vacuolar malate and citrate transporter. This is Citrate-binding protein (CBP) from Hevea brasiliensis (Para rubber tree).